Reading from the N-terminus, the 175-residue chain is Large ribosomal subunit protein uL15 (175 aa).

Disordered stretches follow at residues 1 to 65 (MSTL…LPKF) and 155 to 175 (PESA…QPKA). Positions 12-21 (RSWHRKKRVG) are enriched in basic residues. Positions 22–38 (RGQGSGLGKTAGRGGKG) are enriched in gly residues. The span at 160–169 (KAHAGKGVKA) shows a compositional bias: low complexity.

Belongs to the universal ribosomal protein uL15 family. In terms of assembly, part of the 50S ribosomal subunit.

Functionally, binds to the 23S rRNA. This Myxococcus xanthus (strain DK1622) protein is Large ribosomal subunit protein uL15.